We begin with the raw amino-acid sequence, 148 residues long: Methylglyoxal synthase (148 aa).

In terms of domain architecture, MGS-like spans 4 to 148; it reads VSVPAIKRIV…LSYNTKVKKD (145 aa). Substrate is bound by residues histidine 17, lysine 21, 43–46, and 63–64; these read TGTT and SG. The Proton donor/acceptor role is filled by aspartate 69. Histidine 96 serves as a coordination point for substrate.

It belongs to the methylglyoxal synthase family.

It catalyses the reaction dihydroxyacetone phosphate = methylglyoxal + phosphate. Catalyzes the formation of methylglyoxal from dihydroxyacetone phosphate. The protein is Methylglyoxal synthase of Leptospira interrogans serogroup Icterohaemorrhagiae serovar copenhageni (strain Fiocruz L1-130).